Here is a 339-residue protein sequence, read N- to C-terminus: Ribosomal RNA small subunit methyltransferase H (339 aa).

S-adenosyl-L-methionine-binding positions include 36 to 38 (GGY), aspartate 55, phenylalanine 82, aspartate 103, and glutamine 110. Positions 286-319 (GPIGPSEAEATANPRARSAKLRAGERTDAPIPEP) are disordered.

It belongs to the methyltransferase superfamily. RsmH family.

The protein resides in the cytoplasm. The enzyme catalyses cytidine(1402) in 16S rRNA + S-adenosyl-L-methionine = N(4)-methylcytidine(1402) in 16S rRNA + S-adenosyl-L-homocysteine + H(+). Specifically methylates the N4 position of cytidine in position 1402 (C1402) of 16S rRNA. In Methylobacterium nodulans (strain LMG 21967 / CNCM I-2342 / ORS 2060), this protein is Ribosomal RNA small subunit methyltransferase H.